The following is a 400-amino-acid chain: Golgin-45 (400 aa).

Residues Met-1–Pro-16 are compositionally biased toward polar residues. Residues Met-1–Glu-58 are disordered. Residue Ser-15 is modified to Phosphoserine. Positions Arg-18–Asp-22 match the Tankyrase-binding motif motif. Ser-49 carries the post-translational modification Phosphoserine. A coiled-coil region spans residues Asn-120 to Asp-213. Thr-348 is modified (phosphothreonine). Ser-353 carries the phosphoserine modification. The segment at Arg-394–Leu-400 is essential for interaction with GORASP2.

Interacts with GORASP2. Interacts with the GTP-bound form of RAB2, but not with other Golgi Rab proteins. Identified in a complex with RAB2 and GORASP2. ADP-ribosylated by tankyrase TNKS and TNKS2. Poly-ADP-ribosylated protein is recognized by RNF146, followed by ubiquitination. Post-translationally, ubiquitinated by RNF146 when poly-ADP-ribosylated, leading to its degradation. As to expression, detected in adrenal gland.

It localises to the golgi apparatus membrane. The protein resides in the nucleus. The protein localises to the cytoplasm. Its function is as follows. Required for normal Golgi structure and for protein transport from the endoplasmic reticulum (ER) through the Golgi apparatus to the cell surface. The sequence is that of Golgin-45 (BLZF1) from Homo sapiens (Human).